Reading from the N-terminus, the 127-residue chain is uncharacterized protein (127 aa).

Positions 1-16 are cleaved as a signal peptide; that stretch reads MIKKIIFGIAILLSTS. Residue cysteine 17 is the site of N-palmitoyl cysteine attachment. A lipid anchor (S-diacylglycerol cysteine) is attached at cysteine 17. Positions 56-101 form a coiled coil; it reads EVREEIQKYRVAIVKINKKKRELYNRLSKEAQNFLAEQQKYKQKLS. Positions 107–118 are enriched in polar residues; sequence VENDQKNNTADS. Residues 107–127 are disordered; the sequence is VENDQKNNTADSNDNKSKDTK.

It is found in the cell membrane. This is an uncharacterized protein from Rickettsia conorii (strain ATCC VR-613 / Malish 7).